The primary structure comprises 426 residues: Serine--tRNA ligase (426 aa).

233–235 (TAE) is a binding site for L-serine. 264-266 (RSE) contributes to the ATP binding site. Glutamate 287 contacts L-serine. Residue 351–354 (EISS) participates in ATP binding. Serine 387 provides a ligand contact to L-serine.

The protein belongs to the class-II aminoacyl-tRNA synthetase family. Type-1 seryl-tRNA synthetase subfamily. In terms of assembly, homodimer. The tRNA molecule binds across the dimer.

Its subcellular location is the cytoplasm. The catalysed reaction is tRNA(Ser) + L-serine + ATP = L-seryl-tRNA(Ser) + AMP + diphosphate + H(+). It catalyses the reaction tRNA(Sec) + L-serine + ATP = L-seryl-tRNA(Sec) + AMP + diphosphate + H(+). The protein operates within aminoacyl-tRNA biosynthesis; selenocysteinyl-tRNA(Sec) biosynthesis; L-seryl-tRNA(Sec) from L-serine and tRNA(Sec): step 1/1. In terms of biological role, catalyzes the attachment of serine to tRNA(Ser). Is also able to aminoacylate tRNA(Sec) with serine, to form the misacylated tRNA L-seryl-tRNA(Sec), which will be further converted into selenocysteinyl-tRNA(Sec). The polypeptide is Serine--tRNA ligase (Clostridium botulinum (strain Langeland / NCTC 10281 / Type F)).